The primary structure comprises 239 residues: Leucine-rich repeat-containing protein 57 (239 aa).

A lipid anchor (N-myristoyl glycine) is attached at glycine 2. LRR repeat units follow at residues 39–60 (NLRT…IIGK), 63–85 (LLKS…CNLK), 86–107 (KLET…FGQL), 109–130 (ALKT…LCCL), 132–153 (HLDV…VGEL), 154–175 (QAIE…ISCC), 177–197 (RLKV…PQSI), and 202–222 (QICL…RELE).

It localises to the membrane. The sequence is that of Leucine-rich repeat-containing protein 57 (Lrrc57) from Mus musculus (Mouse).